The sequence spans 351 residues: GMP reductase (351 aa).

108-131 (EDFVKLKQILSLSSKLKYICIDVA) lines the NADP(+) pocket. K(+) is bound by residues Gly181 and Gly183. The Thioimidate intermediate role is filled by Cys186. 216 to 239 (IISDGGCVVSGDIAKAFGGGADFV) is an NADP(+) binding site.

Belongs to the IMPDH/GMPR family. GuaC type 1 subfamily. In terms of assembly, homotetramer.

The catalysed reaction is IMP + NH4(+) + NADP(+) = GMP + NADPH + 2 H(+). In terms of biological role, catalyzes the irreversible NADPH-dependent deamination of GMP to IMP. It functions in the conversion of nucleobase, nucleoside and nucleotide derivatives of G to A nucleotides, and in maintaining the intracellular balance of A and G nucleotides. The protein is GMP reductase (guaC) of Buchnera aphidicola subsp. Baizongia pistaciae (strain Bp).